A 256-amino-acid polypeptide reads, in one-letter code: Hydroxyacylglutathione hydrolase (256 aa).

Zn(2+) is bound by residues His57, His59, Asp61, His62, His115, Asp134, and His172.

It belongs to the metallo-beta-lactamase superfamily. Glyoxalase II family. Monomer. It depends on Zn(2+) as a cofactor.

It carries out the reaction an S-(2-hydroxyacyl)glutathione + H2O = a 2-hydroxy carboxylate + glutathione + H(+). It functions in the pathway secondary metabolite metabolism; methylglyoxal degradation; (R)-lactate from methylglyoxal: step 2/2. Thiolesterase that catalyzes the hydrolysis of S-D-lactoyl-glutathione to form glutathione and D-lactic acid. This is Hydroxyacylglutathione hydrolase from Rhizobium etli (strain ATCC 51251 / DSM 11541 / JCM 21823 / NBRC 15573 / CFN 42).